The sequence spans 334 residues: Syntaxin-18 (334 aa).

Residues 1-308 (MAVDITLLFR…EDIREAIKNN (308 aa)) lie on the Cytoplasmic side of the membrane. Disordered stretches follow at residues 29-50 (GGAD…GDFS) and 166-225 (LSKL…GEDE). Basic and acidic residues-rich tracts occupy residues 33–50 (GSRD…GDFS) and 166–182 (LSKL…DSTS). Over residues 183-192 (EKAPQNASQD) the composition is skewed to polar residues. Over residues 193 to 207 (SEGKPAAEELPEKPL) the composition is skewed to basic and acidic residues. The 63-residue stretch at 242 to 304 (IGEMNSLFDE…KEGNEDIREA (63 aa)) folds into the t-SNARE coiled-coil homology domain. Residues 309 to 329 (AGFRVWILFFLVMCSFSLLFL) form a helical; Anchor for type IV membrane protein membrane-spanning segment. Over 330–334 (DWYDS) the chain is Lumenal.

This sequence belongs to the syntaxin family. Component of a SNARE complex consisting of STX18, USE1L, BNIP1/SEC20L, and SEC22B. RINT1/TIP20L and ZW10 are associated with the complex through interaction with BNIP1/SEC20L. Interacts directly with USE1L and BNIP1/SEC20L.

It localises to the endoplasmic reticulum membrane. It is found in the golgi apparatus membrane. Syntaxin that may be involved in targeting and fusion of Golgi-derived retrograde transport vesicles with the ER. This Mus musculus (Mouse) protein is Syntaxin-18 (Stx18).